Reading from the N-terminus, the 83-residue chain is Kappa-ctenitoxin-Pn1a (83 aa).

Residues 1–21 form the signal peptide; it reads MWFKIQVLVLAITLITLGIQA. Residues 22 to 37 constitute a propeptide that is removed on maturation; sequence EPNSSPNNPLIVEEDR. Disulfide bonds link C40–C55, C47–C60, C54–C71, and C62–C69. Positions 78–83 are excised as a propeptide; sequence LFGFGK.

The protein belongs to the neurotoxin 02 (plectoxin) family. In terms of tissue distribution, expressed by the venom gland.

It is found in the secreted. In terms of biological role, antagonist of L-type calcium channels (Cav1/CACNA1). In GH3 neuroendocrinal cell line, it reversibly inhibits the A-type potassium current but does not block other potassium currents or calcium channels. Shows an important acetylcholine-mediated antiarrhythmogenic effect in isolated hearts. In vivo, causes paralysis in the posterior limbs and gradual decreases in movement and aggression during 24 hours at dose levels of 5 ug per mouse. The polypeptide is Kappa-ctenitoxin-Pn1a (Phoneutria nigriventer (Brazilian armed spider)).